Reading from the N-terminus, the 291-residue chain is 33 kDa chaperonin (291 aa).

Disulfide bonds link Cys-229–Cys-231 and Cys-262–Cys-265.

This sequence belongs to the HSP33 family. In terms of processing, under oxidizing conditions two disulfide bonds are formed involving the reactive cysteines. Under reducing conditions zinc is bound to the reactive cysteines and the protein is inactive.

Its subcellular location is the cytoplasm. Functionally, redox regulated molecular chaperone. Protects both thermally unfolding and oxidatively damaged proteins from irreversible aggregation. Plays an important role in the bacterial defense system toward oxidative stress. The sequence is that of 33 kDa chaperonin from Aliivibrio salmonicida (strain LFI1238) (Vibrio salmonicida (strain LFI1238)).